A 375-amino-acid chain; its full sequence is Probable aspartate aminotransferase (375 aa).

G31 and N165 together coordinate L-aspartate. K223 bears the N6-(pyridoxal phosphate)lysine mark. An L-aspartate-binding site is contributed by R353.

It belongs to the class-I pyridoxal-phosphate-dependent aminotransferase family. Homodimer. It depends on pyridoxal 5'-phosphate as a cofactor.

It is found in the cytoplasm. The catalysed reaction is L-aspartate + 2-oxoglutarate = oxaloacetate + L-glutamate. The chain is Probable aspartate aminotransferase from Methanocaldococcus jannaschii (strain ATCC 43067 / DSM 2661 / JAL-1 / JCM 10045 / NBRC 100440) (Methanococcus jannaschii).